Reading from the N-terminus, the 535-residue chain is Sterol 26-hydroxylase, mitochondrial (535 aa).

A mitochondrion-targeting transit peptide spans 1–36; that stretch reads MAALGCARLRWALLGPRVAGCGLCPQGARAKAAIPT. Lys-286 carries the post-translational modification N6-acetyllysine. The interval 387–401 is sterol-binding; it reads PLLKAVLKETLRLYP. Residue Cys-480 participates in heme binding. At Lys-524 the chain carries N6-acetyllysine.

This sequence belongs to the cytochrome P450 family. As to quaternary structure, interacts with HSP70; this interaction is required for initial targeting to mitochondria. It depends on heme as a cofactor. In terms of tissue distribution, expressed in all tissues tested. Highest expression in liver and duodenum, followed by adrenal gland and lung. Low expression in kidney and spleen.

The protein localises to the mitochondrion inner membrane. The enzyme catalyses 5beta-cholestane-3alpha,7alpha,12alpha-triol + 6 reduced [adrenodoxin] + 3 O2 + 5 H(+) = (25R)-3alpha,7alpha,12alpha-trihydroxy-5beta-cholestan-26-oate + 6 oxidized [adrenodoxin] + 4 H2O. The catalysed reaction is cholestanol + 2 reduced [adrenodoxin] + O2 + 2 H(+) = (25R)-26-hydroxycholestanol + 2 oxidized [adrenodoxin] + H2O. It carries out the reaction (25R)-3beta-hydroxycholest-5-en-7-one-26-al + 2 reduced [adrenodoxin] + O2 + H(+) = (25R)-3beta-hydroxycholest-5-en-7-one-26-oate + 2 oxidized [adrenodoxin] + H2O. It catalyses the reaction (25R)-3beta,26-dihydroxycholest-5-en-7-one + 2 reduced [adrenodoxin] + O2 + 2 H(+) = (25R)-3beta-hydroxycholest-5-en-7-one-26-al + 2 oxidized [adrenodoxin] + 2 H2O. The enzyme catalyses 7-oxocholesterol + 2 reduced [adrenodoxin] + O2 + 2 H(+) = (25R)-3beta,26-dihydroxycholest-5-en-7-one + 2 oxidized [adrenodoxin] + H2O. The catalysed reaction is calciol + 2 reduced [adrenodoxin] + O2 + 2 H(+) = calcidiol + 2 oxidized [adrenodoxin] + H2O. It carries out the reaction (25R)-5beta-cholestane-3alpha,7alpha,12alpha,26-tetrol + 2 reduced [adrenodoxin] + O2 + 2 H(+) = (25R)-3alpha,7alpha,12alpha-trihydroxy-5beta-cholestan-26-al + 2 oxidized [adrenodoxin] + 2 H2O. It catalyses the reaction 2 reduced [adrenodoxin] + cholesterol + O2 + 2 H(+) = (25R)-cholest-5-ene-3beta,26-diol + 2 oxidized [adrenodoxin] + H2O. The enzyme catalyses (25R)-3beta,4beta-dihydroxycholest-5-en-26-al + 2 reduced [adrenodoxin] + O2 + H(+) = (25R)-3beta,4beta-dihydroxycholest-5-en-26-oate + 2 oxidized [adrenodoxin] + H2O. The catalysed reaction is (25R)-4beta,26-dihydroxycholesterol + 2 reduced [adrenodoxin] + O2 + 2 H(+) = (25R)-3beta,4beta-dihydroxycholest-5-en-26-al + 2 oxidized [adrenodoxin] + 2 H2O. It carries out the reaction 4beta-hydroxycholesterol + 2 reduced [adrenodoxin] + O2 + 2 H(+) = (25R)-4beta,26-dihydroxycholesterol + 2 oxidized [adrenodoxin] + H2O. It catalyses the reaction (25R)-3beta-hydroxy-5-cholesten-26-al + 2 reduced [adrenodoxin] + O2 + H(+) = (25R)-3beta-hydroxy-5-cholestenoate + 2 oxidized [adrenodoxin] + H2O. The enzyme catalyses (25R)-cholest-5-ene-3beta,26-diol + 2 reduced [adrenodoxin] + O2 + 2 H(+) = (25R)-3beta-hydroxy-5-cholesten-26-al + 2 oxidized [adrenodoxin] + 2 H2O. The catalysed reaction is (25R)-3alpha,7alpha,12alpha-trihydroxy-5beta-cholestan-26-al + 2 reduced [adrenodoxin] + O2 + H(+) = (25R)-3alpha,7alpha,12alpha-trihydroxy-5beta-cholestan-26-oate + 2 oxidized [adrenodoxin] + H2O. It carries out the reaction 5beta-cholestane-3alpha,7alpha,12alpha-triol + 2 reduced [adrenodoxin] + O2 + 2 H(+) = (25R)-5beta-cholestane-3alpha,7alpha,12alpha,26-tetrol + 2 oxidized [adrenodoxin] + H2O. Its pathway is hormone biosynthesis; cholecalciferol biosynthesis. It functions in the pathway steroid metabolism; cholesterol degradation. The protein operates within lipid metabolism; bile acid biosynthesis. Functionally, cytochrome P450 monooxygenase that catalyzes regio- and stereospecific hydroxylation of cholesterol and its derivatives. Hydroxylates (with R stereochemistry) the terminal methyl group of cholesterol side-chain in a three step reaction to yield at first a C26 alcohol, then a C26 aldehyde and finally a C26 acid. Regulates cholesterol homeostasis by catalyzing the conversion of excess cholesterol to bile acids via both the 'neutral' (classic) and the 'acid' (alternative) pathways. May also regulate cholesterol homeostasis via generation of active oxysterols, which act as ligands for NR1H2 and NR1H3 nuclear receptors, modulating the transcription of genes involved in lipid metabolism. Plays a role in cholestanol metabolism in the cerebellum. Similarly to cholesterol, hydroxylates cholestanol and may facilitate sterol diffusion through the blood-brain barrier to the systemic circulation for further degradation. Also hydroxylates retinal 7-ketocholesterol, a noxious oxysterol with pro-inflammatory and pro-apoptotic effects, and may play a role in its elimination from the retinal pigment epithelium. May play a redundant role in vitamin D biosynthesis. Catalyzes 25-hydroxylation of vitamin D3 that is required for its conversion to a functionally active form. The sequence is that of Sterol 26-hydroxylase, mitochondrial (CYP27A1) from Oryctolagus cuniculus (Rabbit).